Consider the following 448-residue polypeptide: 4-hydroxybenzoate transporter PcaK (448 aa).

At 1–30 the chain is on the cytoplasmic side; that stretch reads MNSPSLPAVERLDVQAFINAQPLSPYQWRI. A helical membrane pass occupies residues 31–51; that stretch reads VLLCFLIVFLDGLDTAAMGFI. The Periplasmic portion of the chain corresponds to 52-67; it reads APALTQDWGIDRASLG. A helical membrane pass occupies residues 68–88; it reads PVMSAALIGMVFGALGSGPLA. Residues 89–94 are Cytoplasmic-facing; that stretch reads DRYGRK. Residues 95–115 traverse the membrane as a helical segment; that stretch reads LVLVAAVFLFGLFSLASAYST. Topologically, residues 116 to 119 are periplasmic; the sequence is NVEQ. The helical transmembrane segment at 120–140 threads the bilayer; the sequence is LLALRFLTGLGLGAAMPNATT. Residues 141 to 152 lie on the Cytoplasmic side of the membrane; it reads LLSEYTPERLKS. The helical transmembrane segment at 153–173 threads the bilayer; it reads LLVTSMFCGFNLGMACGGFVS. The Periplasmic segment spans residues 174–184; the sequence is AKLIPLFGWHS. The chain crosses the membrane as a helical span at residues 185–205; the sequence is LLLLGGLLPLVLAVVLLFRLP. At 206–261 the chain is on the cytoplasmic side; sequence ESARYLVVRNRGSERVRQVLAPIAPAQVALARSFHVPEQQTVQARNVFAVIFSGTY. The chain crosses the membrane as a helical span at residues 262–282; it reads SAGTLLLWLTYFMGLVIVYLL. The Periplasmic portion of the chain corresponds to 283-301; that stretch reads TSWLPTLMRDSGASLEQAA. A helical membrane pass occupies residues 302–322; sequence FIGALFQFGGVLSAVAVGWAM. Topologically, residues 323–329 are cytoplasmic; it reads DRFNPHK. The helical transmembrane segment at 330-350 threads the bilayer; the sequence is VIGLFYLLAGVFAWCVGQSLG. Residue Q351 is a topological domain, periplasmic. A helical transmembrane segment spans residues 352-372; sequence VTLLATLVLLAGMCINGAQSA. At 373–398 the chain is on the cytoplasmic side; the sequence is MPSLAARFYPTQGRATGVSWMLGIGR. A helical transmembrane segment spans residues 399 to 419; sequence FGAILGAWIGATLLGLGWNFE. Topologically, residues 420–421 are periplasmic; the sequence is QV. A helical transmembrane segment spans residues 422 to 442; that stretch reads LTALVLPAALATAAVLLKGLV. Topologically, residues 443 to 448 are cytoplasmic; the sequence is SHADAG.

Belongs to the major facilitator superfamily. Aromatic acid:H(+) symporter (AAHS) (TC 2.A.1.15) family.

The protein localises to the cell inner membrane. Functionally, transports 4-hydroxybenzoate (4-HBA) and protocatechuate across the membrane. Driven by the proton motive force. Also functions as a chemoreceptor, which is required for chemotaxis to aromatic acids. In Pseudomonas aeruginosa (strain ATCC 15692 / DSM 22644 / CIP 104116 / JCM 14847 / LMG 12228 / 1C / PRS 101 / PAO1), this protein is 4-hydroxybenzoate transporter PcaK (pcaK).